The chain runs to 531 residues: Pancreatic secretory granule membrane major glycoprotein GP2 (531 aa).

Residues 1–21 (MVGCDLLWLAAASCVLTLVSP) form the signal peptide. Asn-33 is a glycosylation site (N-linked (GlcNAc...) asparagine). Positions 34–53 (SSNLDLDCGSPDSPSSGICF) are beta hairpin. 11 disulfides stabilise this stretch: Cys-41–Cys-52, Cys-56–Cys-151, Cys-79–Cys-169, Cys-101–Cys-139, Cys-107–Cys-174, Cys-132–Cys-140, Cys-184–Cys-194, Cys-188–Cys-203, Cys-205–Cys-235, Cys-223–Cys-314, and Cys-255–Cys-278. The D10C stretch occupies residues 54-74 (DPCQNHTVLNDPTRSTENNDS). 2 N-linked (GlcNAc...) asparagine glycosylation sites follow: Asn-58 and Asn-72. Residues 180-224 (APKNCEITCRPEEECVFQNNNWSCVCRQDLHVSDSQSLQPLLDCG) enclose the EGF-like domain. Asn-200 is a glycosylation site (N-linked (GlcNAc...) asparagine). Residues 222–315 (DCGDNEIKVK…FRVNVNFQCA (94 aa)) are ZP-N. In terms of domain architecture, ZP spans 222 to 478 (DCGDNEIKVK…PSCSTNRLRS (257 aa)). N-linked (GlcNAc...) asparagine glycosylation is found at Asn-256 and Asn-285. Positions 316–339 (YPLDMSVSLETALQPIVSSLTVDV) are flexible ZP-N/ZP-C linker. The tract at residues 340-351 (DGAGEFNVKMAL) is internal hydrophobic patch (IHP). The tract at residues 340 to 478 (DGAGEFNVKM…PSCSTNRLRS (139 aa)) is ZP-C. 3 disulfides stabilise this stretch: Cys-395-Cys-455, Cys-416-Cys-471, and Cys-460-Cys-467. Residues 485 to 493 (YNRVLDLGP) are external hydrophobic patch (EHP).

As to quaternary structure, interacts with SYCN. Interacts with bacterial adhesin fimH. N-glycosylated. As to expression, specifically expressed by M (microfold) cells which are atypical epithelial cells of the intestine.

Its subcellular location is the zymogen granule membrane. The protein resides in the secreted. It is found in the cell membrane. The protein localises to the apical cell membrane. It localises to the membrane raft. Its subcellular location is the endosome. In terms of biological role, functions as an intestinal M-cell transcytotic receptor specific of type-I-piliated bacteria that participates in the mucosal immune response toward these bacteria. At the apical membrane of M-cells it binds fimH, a protein of the bacteria type I pilus tip. Internalizes bound bacteria, like E.coli and S.typhimurium, from the lumen of the intestine and delivers them, through M-cells, to the underlying organized lymphoid follicles where they are captured by antigen-presenting dendritic cells to elicit a mucosal immune response. The protein is Pancreatic secretory granule membrane major glycoprotein GP2 of Mus musculus (Mouse).